The sequence spans 551 residues: Putative hydroxymethylpyrimidine/phosphomethylpyrimidine kinase 2 (551 aa).

Glu76 is a 4-amino-5-hydroxymethyl-2-methylpyrimidine binding site.

In the N-terminal section; belongs to the ThiD family. It in the C-terminal section; belongs to the thiaminase-2 family.

It is found in the cytoplasm. It carries out the reaction 4-amino-5-hydroxymethyl-2-methylpyrimidine + ATP = 4-amino-2-methyl-5-(phosphooxymethyl)pyrimidine + ADP + H(+). The catalysed reaction is 4-amino-2-methyl-5-(phosphooxymethyl)pyrimidine + ATP = 4-amino-2-methyl-5-(diphosphooxymethyl)pyrimidine + ADP. The protein operates within cofactor biosynthesis; thiamine diphosphate biosynthesis; 4-amino-2-methyl-5-diphosphomethylpyrimidine from 5-amino-1-(5-phospho-D-ribosyl)imidazole: step 2/3. Its pathway is cofactor biosynthesis; thiamine diphosphate biosynthesis; 4-amino-2-methyl-5-diphosphomethylpyrimidine from 5-amino-1-(5-phospho-D-ribosyl)imidazole: step 3/3. Catalyzes the phosphorylation of hydroxymethylpyrimidine phosphate (HMP-P) to HMP-PP, and of HMP to HMP-P. The sequence is that of Putative hydroxymethylpyrimidine/phosphomethylpyrimidine kinase 2 from Schizosaccharomyces pombe (strain 972 / ATCC 24843) (Fission yeast).